The primary structure comprises 433 residues: Delta-aminolevulinic acid dehydratase, chloroplastic (433 aa).

The N-terminal 56 residues, 1 to 56 (MASTFNIPCNAGTIKNFNNSQRNLGFSSNLGINFAKTRFSNCGDSGRIPSQLVVRA), are a transit peptide targeting the chloroplast. Residues 83–115 (NAPSAPPVPPTPKAPSGTPSVSPLSLGRRPRRN) form a disordered region. Over residues 86–95 (SAPPVPPTPK) the composition is skewed to pro residues. Lys-301 (schiff-base intermediate with substrate) is an active-site residue. 5-aminolevulinate-binding residues include Arg-311 and Lys-323. Residue Glu-339 coordinates Mg(2+). Lys-354 acts as the Schiff-base intermediate with substrate in catalysis. Positions 380 and 419 each coordinate 5-aminolevulinate.

This sequence belongs to the ALAD family. Homooctamer. Mg(2+) serves as cofactor.

It is found in the plastid. The protein localises to the chloroplast. The catalysed reaction is 2 5-aminolevulinate = porphobilinogen + 2 H2O + H(+). It functions in the pathway porphyrin-containing compound metabolism; protoporphyrin-IX biosynthesis; coproporphyrinogen-III from 5-aminolevulinate: step 1/4. Catalyzes an early step in the biosynthesis of tetrapyrroles. Binds two molecules of 5-aminolevulinate per subunit, each at a distinct site, and catalyzes their condensation to form porphobilinogen. The chain is Delta-aminolevulinic acid dehydratase, chloroplastic (HEMB) from Spinacia oleracea (Spinach).